The sequence spans 609 residues: Myoneurin (609 aa).

The BTB domain occupies 24–89 (CDCTILIGDF…IYSGNLNYDS (66 aa)). 2 short sequence motifs (nuclear localization signal) span residues 172-188 (KKSQKIKRWKRPLRSHQ) and 257-262 (QKPAKL). C2H2-type zinc fingers lie at residues 301–323 (PVCNTCGKVFSEASSLRRHMRIH), 329–351 (YVCHLCAKAFTQCNQLKTHVRTH), 357–380 (YQCKKCDKGFAQKCQLVFHSRMHH), 386–408 (YKCDVCNLQFATSSNLKIHARKH), 414–436 (YVCDRCGQRFAQASTLTYHVRRH), 442–464 (YVCDTCGKAFAVSSSLITHARKH), 470–492 (YICGVCRKSFISSGELNKHFRSH), and 498–521 (FVCEVCGNSYTDVKNLKKHKLKMH). Residues 528–553 (IEMKSAENSSSSEDSTTKSPEPESLE) form a disordered region. Residues 533–546 (AENSSSSEDSTTKS) show a composition bias toward low complexity.

The protein localises to the nucleus. The polypeptide is Myoneurin (mynn) (Xenopus laevis (African clawed frog)).